The primary structure comprises 549 residues: Cytoplasmic trehalase (549 aa).

Substrate-binding positions include R168, 175–176 (WD), N212, 221–223 (RSQ), 292–294 (RDE), and G324. Residues D326 and E509 each act as proton donor/acceptor in the active site. E525 is a binding site for substrate.

This sequence belongs to the glycosyl hydrolase 37 family. As to quaternary structure, monomer.

It localises to the cytoplasm. The enzyme catalyses alpha,alpha-trehalose + H2O = alpha-D-glucose + beta-D-glucose. The protein operates within glycan degradation; trehalose degradation; D-glucose from alpha,alpha-trehalose: step 1/1. Its function is as follows. Hydrolyzes trehalose to glucose. Could be involved, in cells returning to low osmolarity conditions, in the utilization of the accumulated cytoplasmic trehalose, which was synthesized in response to high osmolarity. The chain is Cytoplasmic trehalase from Shigella boydii serotype 4 (strain Sb227).